The following is a 257-amino-acid chain: 5'-nucleotidase SurE (257 aa).

The a divalent metal cation site is built by Asp8, Asp9, Ser40, and Asn93.

The protein belongs to the SurE nucleotidase family. A divalent metal cation serves as cofactor.

It is found in the cytoplasm. The catalysed reaction is a ribonucleoside 5'-phosphate + H2O = a ribonucleoside + phosphate. Functionally, nucleotidase that shows phosphatase activity on nucleoside 5'-monophosphates. The sequence is that of 5'-nucleotidase SurE from Phenylobacterium zucineum (strain HLK1).